The chain runs to 291 residues: Probable cell wall amidase LytH (291 aa).

Residues Met1 to Asp40 form the signal peptide. The region spanning Glu41–Asn105 is the SH3b domain. The MurNAc-LAA domain occupies Ile122–Lys286. The tract at residues Val123–Asn147 is disordered. Residues Gln133–Lys142 are compositionally biased toward polar residues.

It belongs to the N-acetylmuramoyl-L-alanine amidase 3 family.

The protein localises to the secreted. Its function is as follows. Probably involved in cell-wall metabolism. This Staphylococcus epidermidis (strain ATCC 35984 / DSM 28319 / BCRC 17069 / CCUG 31568 / BM 3577 / RP62A) protein is Probable cell wall amidase LytH (lytH).